Here is a 28-residue protein sequence, read N- to C-terminus: Gamma-conotoxin-like de7a (28 aa).

Intrachain disulfides connect Cys2-Cys18, Cys9-Cys22, and Cys17-Cys27. Pro4 is subject to 4-hydroxyproline. Glu13 and Glu16 each carry 4-carboxyglutamate. Serine amide is present on Ser28.

This sequence belongs to the conotoxin O1 superfamily. As to expression, expressed by the venom duct.

The protein localises to the secreted. Functionally, gamma-conotoxins may act on voltage-gated non-specific cation pacemaker channels (HCN). The chain is Gamma-conotoxin-like de7a from Conasprella delessertii (Sozon's cone).